The sequence spans 783 residues: LPS-assembly protein LptD (783 aa).

The first 24 residues, 1–24, serve as a signal peptide directing secretion; that stretch reads MKKNYYSLISFSIFTALYSTAGFA.

The protein belongs to the LptD family. Component of the lipopolysaccharide transport and assembly complex. Interacts with LptE and LptA.

The protein resides in the cell outer membrane. Together with LptE, is involved in the assembly of lipopolysaccharide (LPS) at the surface of the outer membrane. The protein is LPS-assembly protein LptD of Mannheimia succiniciproducens (strain KCTC 0769BP / MBEL55E).